A 473-amino-acid chain; its full sequence is Ras-GEF domain-containing family member 1B (473 aa).

Residues 34–161 (HDNNLLSGSL…NVQQMMQCLI (128 aa)) form the N-terminal Ras-GEF domain. Residues 205–453 (DPYTLAQQLT…YLASYESEGP (249 aa)) form the Ras-GEF domain.

Interacts with CCDC124 during cytokinesis. Interacts with Ras family proteins. As to expression, constitutively expressed in brain, intestine and testis. Low constitutive expression, if any, in heart, lung, lymph nodes and thymus. Up-regulated in heart, kidney, liver, lymph nodes, spleen and thymus at day 20 after infection with Trypanosoma cruzi. Not detected in muscle.

It localises to the early endosome. The protein localises to the late endosome. The protein resides in the midbody. Its function is as follows. Guanine nucleotide exchange factor (GEF) with specificity for RAP2A, it doesn't seems to activate other Ras family proteins (in vitro). In Mus musculus (Mouse), this protein is Ras-GEF domain-containing family member 1B (Rasgef1b).